Consider the following 446-residue polypeptide: tRNA-2-methylthio-N(6)-dimethylallyladenosine synthase (446 aa).

The region spanning 3–124 (KKLYIKTYGC…LPELISKVVR (122 aa)) is the MTTase N-terminal domain. [4Fe-4S] cluster is bound by residues Cys12, Cys48, Cys87, Cys162, Cys166, and Cys169. A Radical SAM core domain is found at 148 to 380 (YPQGASSFIS…QKELAAQQLA (233 aa)). The region spanning 383-446 (ESCIGSTMKV…LNSLSGEIYR (64 aa)) is the TRAM domain.

This sequence belongs to the methylthiotransferase family. MiaB subfamily. Monomer. [4Fe-4S] cluster serves as cofactor.

Its subcellular location is the cytoplasm. The catalysed reaction is N(6)-dimethylallyladenosine(37) in tRNA + (sulfur carrier)-SH + AH2 + 2 S-adenosyl-L-methionine = 2-methylsulfanyl-N(6)-dimethylallyladenosine(37) in tRNA + (sulfur carrier)-H + 5'-deoxyadenosine + L-methionine + A + S-adenosyl-L-homocysteine + 2 H(+). Its function is as follows. Catalyzes the methylthiolation of N6-(dimethylallyl)adenosine (i(6)A), leading to the formation of 2-methylthio-N6-(dimethylallyl)adenosine (ms(2)i(6)A) at position 37 in tRNAs that read codons beginning with uridine. This is tRNA-2-methylthio-N(6)-dimethylallyladenosine synthase from Rickettsia bellii (strain OSU 85-389).